We begin with the raw amino-acid sequence, 673 residues long: F-box/LRR-repeat protein 17 (673 aa).

A disordered region spans residues 1 to 39 (MGHVAPHASKKEHVAPHAAEKDHVAPHASKKEHVAPHAA). Residues 9–39 (SKKEHVAPHAAEKDHVAPHASKKEHVAPHAA) show a composition bias toward basic and acidic residues. Residues 291–338 (PLHINQLPSSLLLKIFSNLSLNERCILASLVCKYWRDLCLDSQFWKQL) form the F-box domain.

Belongs to the FBXL17 family. Part of the SCF (SKP1-CUL1-F-box) E3 ubiquitin-protein ligase complex SCF(FBXL17). Interacts with BTB domain-containing proteins; specifically recognizes and binds a conserved degron of non-consecutive residues present at the interface of BTB dimers of aberrant composition. Expressed in the neuro-ectoderm of embryos.

It is found in the cytoplasm. It localises to the nucleus. Its function is as follows. Substrate-recognition component of the SCF(FBXL17) E3 ubiquitin ligase complex, a key component of a quality control pathway required to ensure functional dimerization of BTB domain-containing proteins (dimerization quality control, DQC). FBXL17 specifically recognizes and binds a conserved degron of non-consecutive residues present at the interface of BTB dimers of aberrant composition: aberrant BTB dimer are then ubiquitinated by the SCF(FBXL17) complex and degraded by the proteasome. The ability of the SCF(FBXL17) complex to eliminate compromised BTB dimers is required for the differentiation and survival of neural crest and neuronal cells. The chain is F-box/LRR-repeat protein 17 from Xenopus laevis (African clawed frog).